The sequence spans 268 residues: 3-deoxy-manno-octulosonate cytidylyltransferase (268 aa).

The protein belongs to the KdsB family.

The protein resides in the cytoplasm. The catalysed reaction is 3-deoxy-alpha-D-manno-oct-2-ulosonate + CTP = CMP-3-deoxy-beta-D-manno-octulosonate + diphosphate. It functions in the pathway nucleotide-sugar biosynthesis; CMP-3-deoxy-D-manno-octulosonate biosynthesis; CMP-3-deoxy-D-manno-octulosonate from 3-deoxy-D-manno-octulosonate and CTP: step 1/1. Its pathway is bacterial outer membrane biogenesis; lipopolysaccharide biosynthesis. In terms of biological role, activates KDO (a required 8-carbon sugar) for incorporation into bacterial lipopolysaccharide in Gram-negative bacteria. In Ralstonia pickettii (strain 12J), this protein is 3-deoxy-manno-octulosonate cytidylyltransferase.